A 235-amino-acid chain; its full sequence is Uridylate kinase (235 aa).

8–11 (KFSG) serves as a coordination point for ATP. Residues 16–21 (GKEGYG) are involved in allosteric activation by GTP. A UMP-binding site is contributed by G50. ATP-binding residues include G51 and R55. UMP is bound by residues D71 and 132–139 (TGNPYFTT). T159, Y165, and D168 together coordinate ATP.

The protein belongs to the UMP kinase family. Homohexamer.

It is found in the cytoplasm. It catalyses the reaction UMP + ATP = UDP + ADP. It participates in pyrimidine metabolism; CTP biosynthesis via de novo pathway; UDP from UMP (UMPK route): step 1/1. Its activity is regulated as follows. Allosterically activated by GTP. Inhibited by UTP. Catalyzes the reversible phosphorylation of UMP to UDP. This is Uridylate kinase from Sulfurovum sp. (strain NBC37-1).